A 98-amino-acid polypeptide reads, in one-letter code: Feather keratin (98 aa).

The residue at position 1 (alanine 1) is an N-acetylalanine.

This sequence belongs to the avian keratin family. The avian keratins (F-ker, S-ker, C-ker and B-ker) are a complex mixture of very similar polypeptides.

The polypeptide is Feather keratin (Chroicocephalus novaehollandiae (Silver gull)).